The sequence spans 622 residues: Chromosomal replication initiator protein DnaA (622 aa).

Positions 1–99 (MADVPADLAA…SAGEPPAPPA (99 aa)) are domain I, interacts with DnaA modulators. The segment at 88-282 (DDSAGEPPAP…APGPGEPHAR (195 aa)) is disordered. The tract at residues 100 to 281 (PPMHQSHQGP…PAPGPGEPHA (182 aa)) is domain II. Composition is skewed to basic and acidic residues over residues 118–137 (QRDD…RPSD) and 176–210 (GYQD…EPWR). Residues 250-262 (PGGHGPGRTGGSV) show a composition bias toward gly residues. Positions 282 to 498 (RLNPKYLFDT…GALIRVTAFA (217 aa)) are domain III, AAA+ region. G326, G328, K329, and T330 together coordinate ATP. A domain IV, binds dsDNA region spans residues 499–622 (SLNRQPVDLG…TELTNRIKNG (124 aa)).

Belongs to the DnaA family. Oligomerizes as a right-handed, spiral filament on DNA at oriC.

The protein resides in the cytoplasm. Functionally, plays an essential role in the initiation and regulation of chromosomal replication. ATP-DnaA binds to the origin of replication (oriC) to initiate formation of the DNA replication initiation complex once per cell cycle. Binds the DnaA box (a 9 base pair repeat at the origin) and separates the double-stranded (ds)DNA. Forms a right-handed helical filament on oriC DNA; dsDNA binds to the exterior of the filament while single-stranded (ss)DNA is stabiized in the filament's interior. The ATP-DnaA-oriC complex binds and stabilizes one strand of the AT-rich DNA unwinding element (DUE), permitting loading of DNA polymerase. After initiation quickly degrades to an ADP-DnaA complex that is not apt for DNA replication. Binds acidic phospholipids. The protein is Chromosomal replication initiator protein DnaA of Streptomyces griseus subsp. griseus (strain JCM 4626 / CBS 651.72 / NBRC 13350 / KCC S-0626 / ISP 5235).